Here is a 474-residue protein sequence, read N- to C-terminus: Vacuolar basic amino acid transporter 2 (474 aa).

The Cytoplasmic portion of the chain corresponds to 1-33 (MSISNWITTAYLITSTSFQPLYGSFSDALGRRN). A helical membrane pass occupies residues 34–54 (CLFFANGAFTIGCLACGFSKN). Residues 55-62 (IYMLSFMR) are Vacuolar-facing. Residues 63 to 85 (ALTGIGGGGLITLSTIVNSDVIP) traverse the membrane as a helical segment. Over 86 to 97 (SSKRGIFQAFQN) the chain is Cytoplasmic. A helical membrane pass occupies residues 98–118 (LLLGFGAICGASFGGTIASSI). At 119 to 121 (GWR) the chain is on the vacuolar side. Residues 122–142 (WCFLIQVPISVISSILMNYYV) traverse the membrane as a helical segment. At 143-167 (PNQKEYNRQNSSIFQNPGKILRDID) the chain is on the cytoplasmic side. A helical membrane pass occupies residues 168 to 188 (VMGSILIITGLTLQLLYLSLG). The Vacuolar portion of the chain corresponds to 189–196 (CSTSKLSW). The chain crosses the membrane as a helical span at residues 197-217 (TSPSVLLLLVGSVIILLLFIL). Topologically, residues 218–238 (HERKTSARAIIPMELVNSSYS) are cytoplasmic. Residues 239-259 (VVVLSISILVGFASYAYLFTL) traverse the membrane as a helical segment. The Vacuolar portion of the chain corresponds to 260–273 (PLFFQIVLGDSTAK). The chain crosses the membrane as a helical span at residues 274–294 (AGLRLTIPSLFTPVGSLITGF). Residues 295-303 (SMSKYNCLR) lie on the Cytoplasmic side of the membrane. The helical transmembrane segment at 304–324 (LLLYIGISLMFLGNFLFLFIE) threads the bilayer. Residues 325-331 (KTSPNWL) lie on the Vacuolar side of the membrane. Residues 332-352 (IGLFLIPANLGQGITFPTTLF) form a helical membrane-spanning segment. The Cytoplasmic segment spans residues 353–375 (TFIFMFSKSDQATATSTLYLFRS). A helical transmembrane segment spans residues 376–396 (IGSVWGVAISAGVIQLSFAGL). Topologically, residues 397–447 (LRSNLKGLLDENKIKKLIVQLSANSSYIGSLHGEVKNTVIKSFDEATKRAH) are vacuolar. Asn420 is a glycosylation site (N-linked (GlcNAc...) asparagine). The helical transmembrane segment at 448–468 (LMSTLLSSLALILCILKDNLA) threads the bilayer. The Cytoplasmic portion of the chain corresponds to 469-474 (KPKTRR).

The protein belongs to the major facilitator superfamily.

It localises to the vacuole membrane. Functionally, transporter required for vacuolar uptake of histidine, arginine and lysine and to a lesser extent tyrosine. This Saccharomyces cerevisiae (strain ATCC 204508 / S288c) (Baker's yeast) protein is Vacuolar basic amino acid transporter 2 (VBA2).